The primary structure comprises 191 residues: Elongation factor P 1 (191 aa).

It belongs to the elongation factor P family.

It localises to the cytoplasm. The protein operates within protein biosynthesis; polypeptide chain elongation. Involved in peptide bond synthesis. Stimulates efficient translation and peptide-bond synthesis on native or reconstituted 70S ribosomes in vitro. Probably functions indirectly by altering the affinity of the ribosome for aminoacyl-tRNA, thus increasing their reactivity as acceptors for peptidyl transferase. The chain is Elongation factor P 1 from Lactobacillus acidophilus (strain ATCC 700396 / NCK56 / N2 / NCFM).